The chain runs to 732 residues: Cullin-3B (732 aa).

Residues 662–724 (DRKPQIEAAI…RDFLERDNTD (63 aa)) form the Cullin neddylation domain. Residue K676 forms a Glycyl lysine isopeptide (Lys-Gly) (interchain with G-Cter in NEDD8) linkage.

This sequence belongs to the cullin family. Interacts with BTB/POZ-MATH proteins BPM1 and BPM3. Post-translationally, neddylated. Deneddylated via its interaction with the COP9 signalosome (CSN) complex.

The protein operates within protein modification; protein ubiquitination. Its function is as follows. Component of the cullin-RING ubiquitin ligases (CRL), or CUL3-RBX1-BTB protein E3 ligase complexes which mediate the ubiquitination and subsequent proteasomal degradation of target proteins. The functional specificity of the CRL complex depends on the BTB domain-containing protein as the substrate recognition component. Involved in embryo pattern formation and endosperm development. Required for the normal division and organization of the root stem cells and columella root cap cells. Regulates primary root growth by an unknown pathway, but in an ethylene-dependent manner. Functions in distal root patterning, by an ethylene-independent mechanism. Functionally redundant with CUL3A. The chain is Cullin-3B (CUL3B) from Arabidopsis thaliana (Mouse-ear cress).